The chain runs to 428 residues: Kynureninase (428 aa).

Pyridoxal 5'-phosphate contacts are provided by residues T104, T105, 132–135 (FPSD), D213, H216, and Y238. The residue at position 239 (K239) is an N6-(pyridoxal phosphate)lysine. Residues W267 and T295 each coordinate pyridoxal 5'-phosphate.

It belongs to the kynureninase family. As to quaternary structure, homodimer. Pyridoxal 5'-phosphate is required as a cofactor.

It catalyses the reaction L-kynurenine + H2O = anthranilate + L-alanine + H(+). It carries out the reaction 3-hydroxy-L-kynurenine + H2O = 3-hydroxyanthranilate + L-alanine + H(+). The protein operates within amino-acid degradation; L-kynurenine degradation; L-alanine and anthranilate from L-kynurenine: step 1/1. It functions in the pathway cofactor biosynthesis; NAD(+) biosynthesis; quinolinate from L-kynurenine: step 2/3. Functionally, catalyzes the cleavage of L-kynurenine (L-Kyn) and L-3-hydroxykynurenine (L-3OHKyn) into anthranilic acid (AA) and 3-hydroxyanthranilic acid (3-OHAA), respectively. In Bacillus thuringiensis subsp. konkukian (strain 97-27), this protein is Kynureninase.